The sequence spans 611 residues: MQSSSLGNADDPRFRQTHLFQMLVKVINTSAENATKTAIATSSTSTPSFVDTYSTSSLLGEEGRMVMIVVIGAMFALVTSLGNLMVMVSFKIDKQLQTISNYFLFSLAVADIAIGVISIPMFTYYTAIQKWDLGYTMCQFWLCIDYLMSNASVLNLLLISFDRYFSVTRPLSYRPRRTTKKALTMIACTYIISLILWPPWIISWPYIEGKFTAEPGTCVVQFLQTNPYVTVGTAVAAFYLPVTIMCILYTRVYWETQKRQKEFGKLQATQTWASDVVDRPSTQSFRNSKMWKKVKKFSRRSMKRDVSSTSIIKSSGSMRKKNNQDGYVEDSVTPCTSSRNSKRKSWLRNCTGKSNSSSEDSSEAVAMNLDDTSLSSSHFALSGSRRRNISPPCTPMPTNFEDEEQTDAGASMRNGSARFRSRPSDTGKNNNSDTYTVLIELNDEGSRPSVRLSSCEPYLDEPISTRNRSKSDCNSEIDERRHSLLNKQSPFKNGRILKNFSSQERKSEKEQRKNERKQESKAAKTLSAILCAFIATWTPYNLIVCWEAFFPNTVPNVLWTFSYFLCYINSTINPLCYALCNARFRHTYMRILRCKFKAERPTMNQGYVRRN.

Over 1–67 (MQSSSLGNAD…LLGEEGRMVM (67 aa)) the chain is Extracellular. N-linked (GlcNAc...) asparagine glycosylation is found at Asn28 and Asn33. A helical membrane pass occupies residues 68–88 (IVVIGAMFALVTSLGNLMVMV). The Cytoplasmic portion of the chain corresponds to 89–101 (SFKIDKQLQTISN). A helical transmembrane segment spans residues 102 to 122 (YFLFSLAVADIAIGVISIPMF). The Extracellular portion of the chain corresponds to 123-140 (TYYTAIQKWDLGYTMCQF). An intrachain disulfide couples Cys138 to Cys218. A helical transmembrane segment spans residues 141–161 (WLCIDYLMSNASVLNLLLISF). At 162 to 181 (DRYFSVTRPLSYRPRRTTKK) the chain is on the cytoplasmic side. The chain crosses the membrane as a helical span at residues 182 to 202 (ALTMIACTYIISLILWPPWII). The Extracellular portion of the chain corresponds to 203–227 (SWPYIEGKFTAEPGTCVVQFLQTNP). Residues 228 to 248 (YVTVGTAVAAFYLPVTIMCIL) form a helical membrane-spanning segment. The Cytoplasmic portion of the chain corresponds to 249 to 525 (YTRVYWETQK…RKQESKAAKT (277 aa)). 4 disordered regions span residues 299–364 (RRSM…SSEA), 377–432 (SHFA…NNNS), 446–477 (SRPS…NSEI), and 500–519 (FSSQ…RKQE). Residues 307–317 (SSTSIIKSSGS) show a composition bias toward low complexity. Over residues 503–519 (QERKSEKEQRKNERKQE) the composition is skewed to basic and acidic residues. Residues 526–546 (LSAILCAFIATWTPYNLIVCW) form a helical membrane-spanning segment. The Extracellular portion of the chain corresponds to 547–557 (EAFFPNTVPNV). A helical membrane pass occupies residues 558-578 (LWTFSYFLCYINSTINPLCYA). Topologically, residues 579-611 (LCNARFRHTYMRILRCKFKAERPTMNQGYVRRN) are cytoplasmic.

Belongs to the G-protein coupled receptor 1 family. Muscarinic acetylcholine receptor subfamily.

Its subcellular location is the cell membrane. In terms of biological role, the muscarinic acetylcholine receptor mediates various cellular responses, including inhibition of adenylate cyclase, breakdown of phosphoinositides and modulation of potassium channels through the action of G proteins. Primary transducing effect is Pi turnover. Enhances the release of the neurotransmitter acetlycholine in cholinergic motor neurons, which in turn positively feeds back to depolarize body wall muscles and allows for the maintenance of normal body posture and locomotion. This Caenorhabditis elegans protein is Muscarinic acetylcholine receptor gar-3 (gar-3).